The primary structure comprises 1386 residues: X-linked retinitis pigmentosa GTPase regulator homolog (1386 aa).

Disordered stretches follow at residues 1–25 (MFFKRSTNSRKTSANSSSDTSTSSE), 37–56 (AGARSQKGSVHRQSGKKARR), and 730–760 (MPQMNAKSKRSDSVTNGAPTLPPPAPKPEQH). The segment covering 9–25 (SRKTSANSSSDTSTSSE) has biased composition (low complexity). The span at 45 to 56 (SVHRQSGKKARR) shows a compositional bias: basic residues. RCC1 repeat units lie at residues 737 to 787 (SKRS…VLSS), 788 to 838 (SGQL…FICS), 839 to 891 (DGSL…VLTD), and 893 to 943 (GRVL…CITE). The segment at 972 to 994 (LKNTEDPSSPSPSTNGSTPRVNL) is disordered. 2 RCC1 repeats span residues 1034–1085 (EGTL…ASTD) and 1087–1139 (GSVF…FVQK).

In terms of biological role, could be a guanine-nucleotide releasing factor for glo-1. May play a role in gut granule biogenesis. Regulates axon termination in PLM and ALM neurons. In Caenorhabditis elegans, this protein is X-linked retinitis pigmentosa GTPase regulator homolog (glo-4).